Consider the following 442-residue polypeptide: UDP-N-acetylmuramate--L-alanine ligase (442 aa).

Residue 109 to 115 (GAHGKTS) coordinates ATP.

It belongs to the MurCDEF family.

Its subcellular location is the cytoplasm. The catalysed reaction is UDP-N-acetyl-alpha-D-muramate + L-alanine + ATP = UDP-N-acetyl-alpha-D-muramoyl-L-alanine + ADP + phosphate + H(+). The protein operates within cell wall biogenesis; peptidoglycan biosynthesis. In terms of biological role, cell wall formation. This is UDP-N-acetylmuramate--L-alanine ligase from Streptococcus pyogenes serotype M49 (strain NZ131).